Here is a 255-residue protein sequence, read N- to C-terminus: Large ribosomal subunit protein uL2 (255 aa).

Positions 201-229 (YAHPHGGGSHQQGGTPVKKNAPPGQKVGF) are disordered.

It belongs to the universal ribosomal protein uL2 family. In terms of assembly, part of the 50S ribosomal subunit. Forms a bridge to the 30S subunit in the 70S ribosome.

Functionally, one of the primary rRNA binding proteins. Required for association of the 30S and 50S subunits to form the 70S ribosome, for tRNA binding and peptide bond formation. It has been suggested to have peptidyltransferase activity; this is somewhat controversial. Makes several contacts with the 16S rRNA in the 70S ribosome. This is Large ribosomal subunit protein uL2 from Caldivirga maquilingensis (strain ATCC 700844 / DSM 13496 / JCM 10307 / IC-167).